The chain runs to 694 residues: E3 ubiquitin-protein ligase RNF169 (694 aa).

Low complexity-rich tracts occupy residues 1-20 (MAAA…AALS) and 33-46 (AAKA…SSPA). Residues 1–46 (MAAAGPSTRASSAAAAAALSRRGRRGRCDEMAAAKAGAPGPASSPA) form a disordered region. Position 12 is a phosphoserine (Ser12). The segment at 61–97 (CTGCLETPGEVAALPCSHSRCRGCASRAAGPGCRRCR) adopts an RING-type zinc-finger fold. Positions 100–153 (GSGWARRRARDDGQAAAELMGERARRGQPEPCRPRRDGGAAASGPRPEPEPLAE) are disordered. Basic and acidic residues predominate over residues 119-137 (MGERARRGQPEPCRPRRDG). Positions 192–200 (DDQIHKLLQ) match the UMI motif motif. A phosphoserine mark is found at Ser234 and Ser236. Lys273 participates in a covalent cross-link: Glycyl lysine isopeptide (Lys-Gly) (interchain with G-Cter in SUMO2). A Phosphoserine modification is found at Ser326. Residue Lys349 forms a Glycyl lysine isopeptide (Lys-Gly) (interchain with G-Cter in SUMO2) linkage. Phosphoserine occurs at positions 390 and 396. Thr397 is subject to Phosphothreonine. Ser472 is subject to Phosphoserine. Lys498 participates in a covalent cross-link: Glycyl lysine isopeptide (Lys-Gly) (interchain with G-Cter in SUMO2). The segment at 515-537 (TCHSSEHGGASSGPSLEREQCEE) is disordered. Thr541 bears the Phosphothreonine mark. At Ser630 the chain carries Phosphoserine. The MIU motif motif lies at 651 to 668 (QEEEDQQLALQSHRMFDS). The LR motif motif lies at 675 to 687 (RRKGSVDQYLLRS). The residue at position 679 (Ser679) is a Phosphoserine.

Belongs to the RNF169 family. In terms of assembly, interacts with DYRK1B. Phosphorylated by DYRK1A; phosphorylation increases RNF169 ability to block accumulation of TP53BP1 at the DSB sites.

Its subcellular location is the chromosome. The protein localises to the nucleus. It is found in the nucleoplasm. It catalyses the reaction S-ubiquitinyl-[E2 ubiquitin-conjugating enzyme]-L-cysteine + [acceptor protein]-L-lysine = [E2 ubiquitin-conjugating enzyme]-L-cysteine + N(6)-ubiquitinyl-[acceptor protein]-L-lysine.. It functions in the pathway protein modification; protein ubiquitination. Functionally, probable E3 ubiquitin-protein ligase that acts as a regulator of double-strand breaks (DSBs) repair following DNA damage. Functions in a non-canonical fashion to harness RNF168-mediated protein recruitment to DSB-containing chromatin, thereby contributing to regulation of DSB repair pathway utilization. Once recruited to DSB repair sites by recognizing and binding ubiquitin catalyzed by RNF168, competes with TP53BP1 and BRCA1 for association with RNF168-modified chromatin, thereby favouring homologous recombination repair (HRR) and single-strand annealing (SSA) instead of non-homologous end joining (NHEJ) mediated by TP53BP1. E3 ubiquitin-protein ligase activity is not required for regulation of DSBs repair. This is E3 ubiquitin-protein ligase RNF169 (Rnf169) from Mus musculus (Mouse).